The sequence spans 268 residues: Ribosomal RNA small subunit methyltransferase A (268 aa).

6 residues coordinate S-adenosyl-L-methionine: Asn-12, Leu-14, Gly-38, Glu-59, Asp-82, and Asn-107.

Belongs to the class I-like SAM-binding methyltransferase superfamily. rRNA adenine N(6)-methyltransferase family. RsmA subfamily.

The protein resides in the cytoplasm. The catalysed reaction is adenosine(1518)/adenosine(1519) in 16S rRNA + 4 S-adenosyl-L-methionine = N(6)-dimethyladenosine(1518)/N(6)-dimethyladenosine(1519) in 16S rRNA + 4 S-adenosyl-L-homocysteine + 4 H(+). Functionally, specifically dimethylates two adjacent adenosines (A1518 and A1519) in the loop of a conserved hairpin near the 3'-end of 16S rRNA in the 30S particle. May play a critical role in biogenesis of 30S subunits. In Onion yellows phytoplasma (strain OY-M), this protein is Ribosomal RNA small subunit methyltransferase A.